The primary structure comprises 813 residues: Raf homolog serine/threonine-protein kinase (813 aa).

The segment at 1–79 (MSRINFKKSS…GGAGTSDKEP (79 aa)) is disordered. Residues 9 to 23 (SSASTTPTSPHCPSP) are compositionally biased toward low complexity. The region spanning 85–161 (KMIMVHLPFD…PGNELWVHSE (77 aa)) is the RBD domain. A Phorbol-ester/DAG-type zinc finger spans residues 170-217 (KHAIVRRTFIPPKSCDVCNNPIWMMGFRCEFCQFKFHQRCSSFAPLYC). Zn(2+) contacts are provided by cysteine 184, cysteine 187, cysteine 198, cysteine 201, histidine 206, cysteine 209, and cysteine 217. Polar residues-rich tracts occupy residues 258-273 (TSGQ…SHPD) and 291-301 (SPQNETSQLSP). Disordered regions lie at residues 258-315 (TSGQ…SAPN), 338-358 (QRLE…QARH), and 383-472 (TPLG…PHHE). Positions 338-348 (QRLEEESRDKT) are enriched in basic and acidic residues. Residues 386-399 (GSNSPSSTCSSPPG) show a composition bias toward low complexity. Positions 406–421 (TLGQSPNVSGSTTSSL) are enriched in polar residues. Over residues 453 to 462 (SPGERLDAQR) the composition is skewed to basic and acidic residues. One can recognise a Protein kinase domain in the interval 481–748 (FIIQYKVGSG…VLERLRDIIL (268 aa)). Residues 487–495 (VGSGSFGTV) and lysine 507 each bind ATP. The active-site Proton acceptor is the aspartate 602.

The protein belongs to the protein kinase superfamily. TKL Ser/Thr protein kinase family. RAF subfamily. In terms of assembly, interacts with cdf-1 in a zinc-dependent manner which promotes its activity. Requires Zn(2+) as cofactor.

It carries out the reaction L-seryl-[protein] + ATP = O-phospho-L-seryl-[protein] + ADP + H(+). The enzyme catalyses L-threonyl-[protein] + ATP = O-phospho-L-threonyl-[protein] + ADP + H(+). Protein kinase that participates in the induction of vulva and has roles in fertility and viability. Acts downstream of the Ras protein let-60. Required for progression of developing oocytes through the pachytene stage. Plays a role in responses to M.nematophilum-mediated bacterial infection by promoting tail swelling and preventing constipation. Positively regulates lifespan upstream of mek-2 and mpk-1. This chain is Raf homolog serine/threonine-protein kinase (lin-45), found in Caenorhabditis elegans.